Reading from the N-terminus, the 65-residue chain is UPF0337 protein PA4738 (65 aa).

It belongs to the UPF0337 (CsbD) family.

This chain is UPF0337 protein PA4738, found in Pseudomonas aeruginosa (strain ATCC 15692 / DSM 22644 / CIP 104116 / JCM 14847 / LMG 12228 / 1C / PRS 101 / PAO1).